The primary structure comprises 52 residues: Teratocyte protein CftICK-I (52 aa).

The N-terminal stretch at 1–19 (MYKLCILFLVVIFAVMAIA) is a signal peptide. 3 cysteine pairs are disulfide-bonded: Cys-22–Cys-37, Cys-29–Cys-41, and Cys-36–Cys-51.

Abundantly expressed by teratocytes, which are extra-embryonic cells released by parasitoid wasps into their hosts during larval eclosion.

It is found in the secreted. Functionally, this endoparasitoid wasp peptide has immununosuppressive, antimicrobial and insecticidal activities. Suppress cellular immunity which is detectable as a reduction of hemocyte encapsulation in the host. Shows potent antifungal activity against C.albicans (MIC~0.25 ug/ml). In vivo, ingestion of this peptide (probably at excessive doses) increases larval mortality and reduces leaf consumption of D.saccharalis, a permissive host for C.flavipes. This Cotesia flavipes (Parasitic wasp) protein is Teratocyte protein CftICK-I.